The sequence spans 246 residues: Exosome complex component Rrp41 (246 aa).

This sequence belongs to the RNase PH family. Rrp41 subfamily. Component of the archaeal exosome complex. Forms a hexameric ring-like arrangement composed of 3 Rrp41-Rrp42 heterodimers. The hexameric ring associates with a trimer of Rrp4 and/or Csl4 subunits.

The protein localises to the cytoplasm. In terms of biological role, catalytic component of the exosome, which is a complex involved in RNA degradation. Has 3'-&gt;5' exoribonuclease activity. Can also synthesize heteromeric RNA-tails. This Pyrobaculum aerophilum (strain ATCC 51768 / DSM 7523 / JCM 9630 / CIP 104966 / NBRC 100827 / IM2) protein is Exosome complex component Rrp41.